A 161-amino-acid chain; its full sequence is uncharacterized protein (161 aa).

The segment covering 1 to 10 (MSKQQEQDTP) has biased composition (polar residues). 3 disordered regions span residues 1–20 (MSKQ…QRLQ), 55–84 (KKTR…MSDE), and 118–161 (LLQQ…ANNS). The stretch at 82-107 (SDEEYARQLQEEMDRLDASIQMDKEA) forms a coiled coil. Residues 144 to 161 (QQSSNTTTSSSCQSANNS) show a composition bias toward low complexity.

This is an uncharacterized protein from Caenorhabditis elegans.